The primary structure comprises 49 residues: Large ribosomal subunit protein bL33A (49 aa).

It belongs to the bacterial ribosomal protein bL33 family.

This chain is Large ribosomal subunit protein bL33A, found in Geobacillus thermodenitrificans (strain NG80-2).